Here is a 132-residue protein sequence, read N- to C-terminus: Small ribosomal subunit protein uS8 (132 aa).

Belongs to the universal ribosomal protein uS8 family. Part of the 30S ribosomal subunit. Contacts proteins S5 and S12.

Functionally, one of the primary rRNA binding proteins, it binds directly to 16S rRNA central domain where it helps coordinate assembly of the platform of the 30S subunit. This chain is Small ribosomal subunit protein uS8, found in Staphylococcus haemolyticus (strain JCSC1435).